We begin with the raw amino-acid sequence, 337 residues long: Ketol-acid reductoisomerase (NADP(+)) (337 aa).

Residues 2–182 (AKIFYDNDAD…GATRAGVLLT (181 aa)) form the KARI N-terminal Rossmann domain. NADP(+) contacts are provided by residues 25–28 (YGSQ), Ser-51, Ser-53, and 83–86 (DTSQ). Residue His-108 is part of the active site. Gly-134 lines the NADP(+) pocket. Residues 183–328 (TFAEETETDL…ANLRKMMPFI (146 aa)) form the KARI C-terminal knotted domain. Positions 191, 195, 227, and 231 each coordinate Mg(2+). Ser-252 contacts substrate.

It belongs to the ketol-acid reductoisomerase family. The cofactor is Mg(2+).

It catalyses the reaction (2R)-2,3-dihydroxy-3-methylbutanoate + NADP(+) = (2S)-2-acetolactate + NADPH + H(+). It carries out the reaction (2R,3R)-2,3-dihydroxy-3-methylpentanoate + NADP(+) = (S)-2-ethyl-2-hydroxy-3-oxobutanoate + NADPH + H(+). It functions in the pathway amino-acid biosynthesis; L-isoleucine biosynthesis; L-isoleucine from 2-oxobutanoate: step 2/4. It participates in amino-acid biosynthesis; L-valine biosynthesis; L-valine from pyruvate: step 2/4. Its function is as follows. Involved in the biosynthesis of branched-chain amino acids (BCAA). Catalyzes an alkyl-migration followed by a ketol-acid reduction of (S)-2-acetolactate (S2AL) to yield (R)-2,3-dihydroxy-isovalerate. In the isomerase reaction, S2AL is rearranged via a Mg-dependent methyl migration to produce 3-hydroxy-3-methyl-2-ketobutyrate (HMKB). In the reductase reaction, this 2-ketoacid undergoes a metal-dependent reduction by NADPH to yield (R)-2,3-dihydroxy-isovalerate. The polypeptide is Ketol-acid reductoisomerase (NADP(+)) (Sorangium cellulosum (strain So ce56) (Polyangium cellulosum (strain So ce56))).